Here is a 487-residue protein sequence, read N- to C-terminus: WD repeat, SAM and U-box domain-containing protein 1 (487 aa).

WD repeat units follow at residues 10–47, 52–93, 95–134, 137–176, 179–227, 237–276, and 279–318; these read SHRD…ELPF, GHGY…AVLE, PGRS…LRRT, VNDT…LHAE, AHDL…SAGI, GQSA…LLYT, and QHDR…SAQG. The SAM domain occupies 347-411; it reads WSEEEVLAWL…MKKIEELKMV (65 aa). A U-box domain is found at 416–487; it reads GTPDEFLCPI…MAIFRWSTSQ (72 aa).

The sequence is that of WD repeat, SAM and U-box domain-containing protein 1 (wdsub1) from Danio rerio (Zebrafish).